The following is a 122-amino-acid chain: Large ribosomal subunit protein uL14 (122 aa).

Belongs to the universal ribosomal protein uL14 family. In terms of assembly, part of the 50S ribosomal subunit. Forms a cluster with proteins L3 and L19. In the 70S ribosome, L14 and L19 interact and together make contacts with the 16S rRNA in bridges B5 and B8.

Binds to 23S rRNA. Forms part of two intersubunit bridges in the 70S ribosome. In Corynebacterium aurimucosum (strain ATCC 700975 / DSM 44827 / CIP 107346 / CN-1) (Corynebacterium nigricans), this protein is Large ribosomal subunit protein uL14.